The following is a 356-amino-acid chain: Heat-inducible transcription repressor HrcA (356 aa).

This sequence belongs to the HrcA family.

Functionally, negative regulator of class I heat shock genes (grpE-dnaK-dnaJ and groELS operons). Prevents heat-shock induction of these operons. In Chlorobaculum tepidum (strain ATCC 49652 / DSM 12025 / NBRC 103806 / TLS) (Chlorobium tepidum), this protein is Heat-inducible transcription repressor HrcA.